Reading from the N-terminus, the 501-residue chain is Phosphoethanolamine N-methyltransferase 1 (501 aa).

The S-adenosyl-L-homocysteine site is built by Gly-72, Arg-77, Asp-93, Asp-118, Val-119, and Asn-137. Positions 170, 175, 176, 180, and 187 each coordinate phosphocholine. N-methylethanolamine phosphate is bound by residues 256–257 and Tyr-265; that span reads QY. Tyr-265 is a binding site for phosphocholine. Residues Val-274, Ser-275, Gly-301, Asp-323, Asp-349, Cys-350, and Arg-366 each contribute to the S-adenosyl-L-homocysteine site. Residues Tyr-397, Tyr-411, Arg-415, Tyr-417, and Lys-483 each coordinate phosphocholine. N-methylethanolamine phosphate is bound by residues Tyr-397, Tyr-411, 415 to 417, and Lys-483; that span reads RGY.

The protein belongs to the class I-like SAM-binding methyltransferase superfamily. PEAMT family.

It catalyses the reaction phosphoethanolamine + S-adenosyl-L-methionine = N-methylethanolamine phosphate + S-adenosyl-L-homocysteine + H(+). The catalysed reaction is N-methylethanolamine phosphate + S-adenosyl-L-methionine = N,N-dimethylethanolamine phosphate + S-adenosyl-L-homocysteine + H(+). It carries out the reaction N,N-dimethylethanolamine phosphate + S-adenosyl-L-methionine = phosphocholine + S-adenosyl-L-homocysteine + H(+). It functions in the pathway phospholipid metabolism; phosphatidylcholine biosynthesis; phosphocholine from phosphoethanolamine: step 1/1. Functionally, involved in phosphocholine biosynthesis. Catalyzes the N-methylation of phosphoethanolamine, phosphomonomethylethanolamine and phosphodimethylethanolamine, the three methylation steps required to convert phosphoethanolamine to phosphocholine (PC). May be involved in root development. The protein is Phosphoethanolamine N-methyltransferase 1 of Zea mays (Maize).